A 338-amino-acid chain; its full sequence is Fructose-1,6-bisphosphatase class 1 (338 aa).

Residues Glu-90, Asp-112, Leu-114, and Asp-115 each contribute to the Mg(2+) site. Substrate-binding positions include 115 to 118, Asn-207, and Lys-273; that span reads DGSS. Mg(2+) is bound at residue Glu-279.

Belongs to the FBPase class 1 family. In terms of assembly, homotetramer. Mg(2+) is required as a cofactor.

The protein resides in the cytoplasm. It catalyses the reaction beta-D-fructose 1,6-bisphosphate + H2O = beta-D-fructose 6-phosphate + phosphate. It functions in the pathway carbohydrate biosynthesis; gluconeogenesis. In Xanthomonas campestris pv. campestris (strain 8004), this protein is Fructose-1,6-bisphosphatase class 1.